Consider the following 328-residue polypeptide: DNA-directed RNA polymerase subunit alpha (328 aa).

Residues 1-234 form an alpha N-terminal domain (alpha-NTD) region; the sequence is MQGSVTEFLK…EQLDAFVDLR (234 aa). Positions 248-328 are alpha C-terminal domain (alpha-CTD); sequence FDPILLRPVD…NWPPASIAED (81 aa).

Belongs to the RNA polymerase alpha chain family. As to quaternary structure, homodimer. The RNAP catalytic core consists of 2 alpha, 1 beta, 1 beta' and 1 omega subunit. When a sigma factor is associated with the core the holoenzyme is formed, which can initiate transcription.

The enzyme catalyses RNA(n) + a ribonucleoside 5'-triphosphate = RNA(n+1) + diphosphate. DNA-dependent RNA polymerase catalyzes the transcription of DNA into RNA using the four ribonucleoside triphosphates as substrates. The sequence is that of DNA-directed RNA polymerase subunit alpha from Haemophilus influenzae (strain PittEE).